A 120-amino-acid polypeptide reads, in one-letter code: Large ribosomal subunit protein uL18 (120 aa).

This sequence belongs to the universal ribosomal protein uL18 family. In terms of assembly, part of the 50S ribosomal subunit; part of the 5S rRNA/L5/L18/L25 subcomplex. Contacts the 5S and 23S rRNAs.

In terms of biological role, this is one of the proteins that bind and probably mediate the attachment of the 5S RNA into the large ribosomal subunit, where it forms part of the central protuberance. The chain is Large ribosomal subunit protein uL18 from Geobacillus thermodenitrificans (strain NG80-2).